A 152-amino-acid chain; its full sequence is Putative polyketide cyclase (152 aa).

It to polyketide cyclases.

Its pathway is antibiotic biosynthesis; curamycin biosynthesis. In Streptomyces cyaneus (Streptomyces curacoi), this protein is Putative polyketide cyclase (curF).